The chain runs to 125 residues: MPTIQQLVRAQRKRIVKKTKSPALCACPQRRGVCTRVYTTTPKKPNSALRKVARVRLSSGFEVTAYIPGIGHNLQEHSVVLIRGGRVKDLPGVRYHIVRGTLDTAGVKERKQSRSKYGVKRVTKK.

It belongs to the universal ribosomal protein uS12 family. In terms of assembly, part of the 30S ribosomal subunit.

The protein localises to the plastid. It localises to the chloroplast. With S4 and S5 plays an important role in translational accuracy. Located at the interface of the 30S and 50S subunits. The chain is Small ribosomal subunit protein uS12c (rps12) from Nephroselmis olivacea (Green alga).